A 287-amino-acid chain; its full sequence is tRNA-cytidine(32) 2-sulfurtransferase (287 aa).

The PP-loop motif signature appears at serine 58–serine 63. [4Fe-4S] cluster is bound by residues cysteine 133, cysteine 136, and cysteine 224.

This sequence belongs to the TtcA family. Homodimer. Requires Mg(2+) as cofactor. It depends on [4Fe-4S] cluster as a cofactor.

The protein resides in the cytoplasm. It catalyses the reaction cytidine(32) in tRNA + S-sulfanyl-L-cysteinyl-[cysteine desulfurase] + AH2 + ATP = 2-thiocytidine(32) in tRNA + L-cysteinyl-[cysteine desulfurase] + A + AMP + diphosphate + H(+). Its pathway is tRNA modification. Catalyzes the ATP-dependent 2-thiolation of cytidine in position 32 of tRNA, to form 2-thiocytidine (s(2)C32). The sulfur atoms are provided by the cysteine/cysteine desulfurase (IscS) system. The polypeptide is tRNA-cytidine(32) 2-sulfurtransferase (Dinoroseobacter shibae (strain DSM 16493 / NCIMB 14021 / DFL 12)).